Reading from the N-terminus, the 98-residue chain is Protein FAM24A (98 aa).

An N-terminal signal peptide occupies residues 1–29; sequence MFDLRTKVMIGIASTLLIAAIVLITVVFC.

The protein belongs to the FAM24 family.

The protein localises to the secreted. In Rattus norvegicus (Rat), this protein is Protein FAM24A (Fam24a).